Here is a 495-residue protein sequence, read N- to C-terminus: GTPase Der (495 aa).

EngA-type G domains are found at residues 3-166 (PVVA…VQDE) and 208-381 (IKLA…ACAT). Residues 9-16 (GRPNVGKS), 56-60 (DTGGI), 118-121 (NKTD), 214-221 (GRPNVGKS), 261-265 (DTAGV), and 326-329 (NKWD) contribute to the GTP site. The KH-like domain maps to 382–466 (RRVSTAMLTR…PIRIQFKEGE (85 aa)).

The protein belongs to the TRAFAC class TrmE-Era-EngA-EngB-Septin-like GTPase superfamily. EngA (Der) GTPase family. As to quaternary structure, associates with the 50S ribosomal subunit.

GTPase that plays an essential role in the late steps of ribosome biogenesis. This is GTPase Der from Pectobacterium carotovorum subsp. carotovorum (strain PC1).